The primary structure comprises 112 residues: Protein Tat (112 aa).

The tract at residues 1–24 is interaction with human CREBBP; that stretch reads MDPVDPEMPPWHHPGSKPQTPCNN. A transactivation region spans residues 1 to 48; the sequence is MDPVDPEMPPWHHPGSKPQTPCNNCYCKRCCYHCYVCFTKKGLGISHG. Residues Cys22, Cys25, and Cys27 each contribute to the Zn(2+) site. The tract at residues 22–37 is cysteine-rich; sequence CNNCYCKRCCYHCYVC. Position 28 is an N6-acetyllysine; by host PCAF (Lys28). Zn(2+) contacts are provided by Cys30, His33, Cys34, and Cys37. Positions 38-48 are core; that stretch reads FTKKGLGISHG. The interval 45 to 112 is disordered; that stretch reads ISHGRKKRRR…CNSCTRISGQ (68 aa). A Nuclear localization signal, RNA-binding (TAR), and protein transduction motif is present at residues 49–56; that stretch reads RKKRRRPA. Positions 49–82 are interaction with the host capping enzyme RNGTT; the sequence is RKKRRRPAAAASYPDNKDPVPEQHTGRKQKRQEE. Lys50 and Lys51 each carry N6-acetyllysine; by host EP300 and GCN5L2. Arg52 and Arg53 each carry asymmetric dimethylarginine; by host PRMT6. Residues 63–91 are compositionally biased toward basic and acidic residues; sequence DNKDPVPEQHTGRKQKRQEEQEKKVEKET. Over residues 93–112 the composition is skewed to polar residues; sequence PSGQPCHQDSCNSCTRISGQ.

Belongs to the lentiviruses Tat family. As to quaternary structure, interacts with host CCNT1. Associates with the P-TEFb complex composed at least of Tat, P-TEFb (CDK9 and CCNT1), TAR RNA, RNA Pol II. Recruits the HATs CREBBP, TAF1/TFIID, EP300, PCAF and GCN5L2. Interacts with host KAT5/Tip60; this interaction targets the latter to degradation. Interacts with the host deacetylase SIRT1. Interacts with host capping enzyme RNGTT; this interaction stimulates RNGTT. Binds to host KDR, and to the host integrins ITGAV/ITGB3 and ITGA5/ITGB1. Interacts with host KPNB1/importin beta-1 without previous binding to KPNA1/importin alpha-1. Interacts with EIF2AK2. Interacts with host nucleosome assembly protein NAP1L1; this interaction may be required for the transport of Tat within the nucleus, since the two proteins interact at the nuclear rim. Interacts with host C1QBP/SF2P32; this interaction involves lysine-acetylated Tat. Interacts with the host chemokine receptors CCR2, CCR3 and CXCR4. Interacts with host DPP4/CD26; this interaction may trigger an anti-proliferative effect. Interacts with host LDLR. Interacts with the host extracellular matrix metalloproteinase MMP1. Interacts with host PRMT6; this interaction mediates Tat's methylation. Interacts with, and is ubiquitinated by MDM2/Hdm2. Interacts with host PSMC3 and HTATIP2. Interacts with STAB1; this interaction may overcome SATB1-mediated repression of IL2 and IL2RA (interleukin) in T cells by binding to the same domain than HDAC1. Interacts (when acetylated) with human CDK13, thereby increasing HIV-1 mRNA splicing and promoting the production of the doubly spliced HIV-1 protein Nef. Interacts with host TBP; this interaction modulates the activity of transcriptional pre-initiation complex. Interacts with host RELA. Interacts with host PLSCR1; this interaction negatively regulates Tat transactivation activity by altering its subcellular distribution. In terms of processing, asymmetrical arginine methylation by host PRMT6 seems to diminish the transactivation capacity of Tat and affects the interaction with host CCNT1. Acetylation by EP300, CREBBP, GCN5L2/GCN5 and PCAF regulates the transactivation activity of Tat. EP300-mediated acetylation of Lys-50 promotes dissociation of Tat from the TAR RNA through the competitive binding to PCAF's bromodomain. In addition, the non-acetylated Tat's N-terminus can also interact with PCAF. PCAF-mediated acetylation of Lys-28 enhances Tat's binding to CCNT1. Lys-50 is deacetylated by SIRT1. Post-translationally, polyubiquitination by host MDM2 does not target Tat to degradation, but activates its transactivation function and fosters interaction with CCNT1 and TAR RNA. In terms of processing, phosphorylated by EIF2AK2 on serine and threonine residues adjacent to the basic region important for TAR RNA binding and function. Phosphorylation of Tat by EIF2AK2 is dependent on the prior activation of EIF2AK2 by dsRNA.

The protein localises to the host nucleus. Its subcellular location is the host nucleolus. It is found in the host cytoplasm. The protein resides in the secreted. Functionally, transcriptional activator that increases RNA Pol II processivity, thereby increasing the level of full-length viral transcripts. Recognizes a hairpin structure at the 5'-LTR of the nascent viral mRNAs referred to as the transactivation responsive RNA element (TAR) and recruits the cyclin T1-CDK9 complex (P-TEFb complex) that will in turn hyperphosphorylate the RNA polymerase II to allow efficient elongation. The CDK9 component of P-TEFb and other Tat-activated kinases hyperphosphorylate the C-terminus of RNA Pol II that becomes stabilized and much more processive. Other factors such as HTATSF1/Tat-SF1, SUPT5H/SPT5, and HTATIP2 are also important for Tat's function. Besides its effect on RNA Pol II processivity, Tat induces chromatin remodeling of proviral genes by recruiting the histone acetyltransferases (HATs) CREBBP, EP300 and PCAF to the chromatin. This also contributes to the increase in proviral transcription rate, especially when the provirus integrates in transcriptionally silent region of the host genome. To ensure maximal activation of the LTR, Tat mediates nuclear translocation of NF-kappa-B by interacting with host RELA. Through its interaction with host TBP, Tat may also modulate transcription initiation. Tat can reactivate a latently infected cell by penetrating in it and transactivating its LTR promoter. In the cytoplasm, Tat is thought to act as a translational activator of HIV-1 mRNAs. Extracellular circulating Tat can be endocytosed by surrounding uninfected cells via the binding to several surface receptors such as CD26, CXCR4, heparan sulfate proteoglycans (HSPG) or LDLR. Neurons are rarely infected, but they internalize Tat via their LDLR. Through its interaction with nuclear HATs, Tat is potentially able to control the acetylation-dependent cellular gene expression. Modulates the expression of many cellular genes involved in cell survival, proliferation or in coding for cytokines or cytokine receptors. Tat plays a role in T-cell and neurons apoptosis. Tat induced neurotoxicity and apoptosis probably contribute to neuroAIDS. Circulating Tat also acts as a chemokine-like and/or growth factor-like molecule that binds to specific receptors on the surface of the cells, affecting many cellular pathways. In the vascular system, Tat binds to ITGAV/ITGB3 and ITGA5/ITGB1 integrins dimers at the surface of endothelial cells and competes with bFGF for heparin-binding sites, leading to an excess of soluble bFGF. This chain is Protein Tat, found in Homo sapiens (Human).